The chain runs to 358 residues: MELMTTYKSNNYPIIIKNNAITELTELLKPYRDVVFIVDKNVEFALPEKIQQALSSTSSEQFTHILKVEGNETTKTFAVYQHIIEELLEQSITRNTCIIAIGGGVIGDFAGFVAATILRGVDFIQVPTTILAHDSSVGGKVGINTPQGKNLVGAFYRPTAVLYDLDFLNTLPYTEISSGYAEVYKHALLNGEEAQLEIETAFPDKKALESLVSLDKFLLKGIQTKLNIVIEDEHEQGKRKFLNLGHTFGHAIEYNQKIPHGHAVMIGILYQFIVANELLNTQFDIMHYINYFKNLDYPLEKVLDTNFEPLLALMSKDKKNDKSGIQMVLLKEIGKPKVIHVNNEVLEKSFATLQNYLK.

Residues 104 to 108 (GVIGD), 128 to 129 (TT), K140, K149, and 167 to 170 (FLNT) each bind NAD(+). Residues E182, H246, and H260 each contribute to the Zn(2+) site.

Belongs to the sugar phosphate cyclases superfamily. Dehydroquinate synthase family. Co(2+) serves as cofactor. It depends on Zn(2+) as a cofactor. The cofactor is NAD(+).

The protein localises to the cytoplasm. The enzyme catalyses 7-phospho-2-dehydro-3-deoxy-D-arabino-heptonate = 3-dehydroquinate + phosphate. Its pathway is metabolic intermediate biosynthesis; chorismate biosynthesis; chorismate from D-erythrose 4-phosphate and phosphoenolpyruvate: step 2/7. Catalyzes the conversion of 3-deoxy-D-arabino-heptulosonate 7-phosphate (DAHP) to dehydroquinate (DHQ). This Staphylococcus carnosus (strain TM300) protein is 3-dehydroquinate synthase.